The chain runs to 288 residues: Polyamine aminopropyltransferase (288 aa).

The PABS domain maps to 9–238 (ETLHDQFGQY…GIMTFAWATD (230 aa)). Q33 provides a ligand contact to S-methyl-5'-thioadenosine. Residues H64 and D88 each contribute to the spermidine site. S-methyl-5'-thioadenosine contacts are provided by residues E108 and 140-141 (DG). Residue D158 is the Proton acceptor of the active site. Spermidine is bound at residue 158-161 (DCTD). Residue P165 coordinates S-methyl-5'-thioadenosine.

This sequence belongs to the spermidine/spermine synthase family. Homodimer or homotetramer.

It is found in the cytoplasm. The enzyme catalyses S-adenosyl 3-(methylsulfanyl)propylamine + putrescine = S-methyl-5'-thioadenosine + spermidine + H(+). It functions in the pathway amine and polyamine biosynthesis; spermidine biosynthesis; spermidine from putrescine: step 1/1. In terms of biological role, catalyzes the irreversible transfer of a propylamine group from the amino donor S-adenosylmethioninamine (decarboxy-AdoMet) to putrescine (1,4-diaminobutane) to yield spermidine. This chain is Polyamine aminopropyltransferase, found in Escherichia coli O17:K52:H18 (strain UMN026 / ExPEC).